Consider the following 314-residue polypeptide: (+)-neomenthol dehydrogenase (314 aa).

Residue 13–36 participates in NADP(+) binding; that stretch reads VTGGNKGIGYETCRQLASKGVVVV. A substrate-binding site is contributed by Ser-183. Tyr-239 acts as the Proton acceptor in catalysis.

This sequence belongs to the short-chain dehydrogenases/reductases (SDR) family. Monomer. In terms of tissue distribution, expressed in flowers and red fruit tissues. Not detected in leaves, stems, roots or green fruits.

The catalysed reaction is (+)-neomenthol + NADP(+) = (1R,4S)-menthone + NADPH + H(+). Functionally, involved in basal resistance against pathogens. In Capsicum annuum (Capsicum pepper), this protein is (+)-neomenthol dehydrogenase (MNR1).